The following is a 301-amino-acid chain: N-acetylmuramic acid 6-phosphate etherase (301 aa).

Residues 57–220 form the SIS domain; sequence TYEKMLFGGR…STSLMIKKGK (164 aa). E85 (proton donor) is an active-site residue. E116 is a catalytic residue.

The protein belongs to the GCKR-like family. MurNAc-6-P etherase subfamily. As to quaternary structure, homodimer.

It catalyses the reaction N-acetyl-D-muramate 6-phosphate + H2O = N-acetyl-D-glucosamine 6-phosphate + (R)-lactate. The protein operates within amino-sugar metabolism; N-acetylmuramate degradation. Specifically catalyzes the cleavage of the D-lactyl ether substituent of MurNAc 6-phosphate, producing GlcNAc 6-phosphate and D-lactate. The protein is N-acetylmuramic acid 6-phosphate etherase of Clostridium botulinum (strain Eklund 17B / Type B).